The chain runs to 292 residues: 4-hydroxy-tetrahydrodipicolinate synthase (292 aa).

T45 provides a ligand contact to pyruvate. Y133 (proton donor/acceptor) is an active-site residue. The active-site Schiff-base intermediate with substrate is K161. I203 is a binding site for pyruvate.

The protein belongs to the DapA family. As to quaternary structure, homotetramer; dimer of dimers.

The protein resides in the cytoplasm. The catalysed reaction is L-aspartate 4-semialdehyde + pyruvate = (2S,4S)-4-hydroxy-2,3,4,5-tetrahydrodipicolinate + H2O + H(+). The protein operates within amino-acid biosynthesis; L-lysine biosynthesis via DAP pathway; (S)-tetrahydrodipicolinate from L-aspartate: step 3/4. Functionally, catalyzes the condensation of (S)-aspartate-beta-semialdehyde [(S)-ASA] and pyruvate to 4-hydroxy-tetrahydrodipicolinate (HTPA). The protein is 4-hydroxy-tetrahydrodipicolinate synthase of Shigella flexneri.